Reading from the N-terminus, the 480-residue chain is Adenosylhomocysteinase (480 aa).

Substrate contacts are provided by Thr-63, Asp-142, and Glu-203. Thr-204–Thr-206 contributes to the NAD(+) binding site. Positions 233 and 237 each coordinate substrate. Residues Asn-238, Gly-267–Gly-272, Glu-290, Asn-325, Ile-346–His-348, and Asn-394 contribute to the NAD(+) site.

This sequence belongs to the adenosylhomocysteinase family. The cofactor is NAD(+).

It is found in the cytoplasm. The catalysed reaction is S-adenosyl-L-homocysteine + H2O = L-homocysteine + adenosine. It functions in the pathway amino-acid biosynthesis; L-homocysteine biosynthesis; L-homocysteine from S-adenosyl-L-homocysteine: step 1/1. Its function is as follows. May play a key role in the regulation of the intracellular concentration of adenosylhomocysteine. The polypeptide is Adenosylhomocysteinase (Xylella fastidiosa (strain M12)).